The following is a 74-amino-acid chain: Veswaprin-a (74 aa).

Positions 1-24 are cleaved as a signal peptide; that stretch reads MSSGGLLLLLGLLTLWAEVTPISG. The region spanning 27-71 is the WAP domain; that stretch reads RPKKPGLCPPRPQKPCVKECKNDWSCPGQQKCCNYGCIDECRDPI. Intrachain disulfides connect C34–C59, C42–C63, C46–C58, and C52–C67.

The protein belongs to the venom waprin family. As to expression, expressed by the venom gland.

The protein localises to the secreted. In terms of biological role, damages membranes of susceptible bacteria. Has no hemolytic activity. Not toxic to mice. Does not inhibit the proteinases elastase and cathepsin G. The chain is Veswaprin-a from Demansia vestigiata (Lesser black whip snake).